The sequence spans 89 residues: Islet amyloid polypeptide (89 aa).

The first 22 residues, 1–22, serve as a signal peptide directing secretion; the sequence is MCLLKLPVVLIVLLVALHHLKA. Residues 23–31 constitute a propeptide that is removed on maturation; sequence TPIESNQVE. An intrachain disulfide couples cysteine 35 to cysteine 40. A Tyrosine amide modification is found at tyrosine 70. A propeptide spanning residues 74–89 is cleaved from the precursor; the sequence is STVDILNREPLNYLPF.

The protein belongs to the calcitonin family. Can form homodimers. Interacts with IDE and INS. Interaction with INS inhibits homodimerization and fibril formation.

It is found in the secreted. Its function is as follows. Amylin/IAPP is a glucoregulatory peptide hormone that plays an important role in the regulation of energy homeostasis. Selectively inhibits insulin-stimulated glucose utilization and glycogen deposition in muscle, while not affecting adipocyte glucose metabolism. IAPP function is mediated by the CALCR-RAMPs (AMYRs) receptor complexes. Amylin can also bind CALCR receptor in the absence of RAMPs, although it is more selective for AMYRs. The sequence is that of Islet amyloid polypeptide (IAPP) from Felis catus (Cat).